The primary structure comprises 347 residues: A-type ATP synthase subunit C (347 aa).

The protein belongs to the V-ATPase V0D/AC39 subunit family. As to quaternary structure, has multiple subunits with at least A(3), B(3), C, D, E, F, H, I and proteolipid K(x).

It localises to the cell membrane. Component of the A-type ATP synthase that produces ATP from ADP in the presence of a proton gradient across the membrane. This Haloquadratum walsbyi (strain DSM 16790 / HBSQ001) protein is A-type ATP synthase subunit C.